The primary structure comprises 198 residues: Large ribosomal subunit protein bL12m (198 aa).

The N-terminal 36 residues, 1–36 (MLPSATSLLRGPCLGLRAAALRLVRQQVPHVCAVRL), are a transit peptide targeting the mitochondrion. Residues 106-115 (GAAPAPTAPE) are compositionally biased toward low complexity. Residues 106-126 (GAAPAPTAPEAAEEDVPKQKE) form a disordered region. N6-acetyllysine is present on residues lysine 125, lysine 138, lysine 142, and lysine 144. N6-acetyllysine; alternate is present on lysine 150. Lysine 150 carries the post-translational modification N6-succinyllysine; alternate. A Glycyl lysine isopeptide (Lys-Gly) (interchain with G-Cter in ubiquitin) cross-link involves residue lysine 150. An N6-succinyllysine modification is found at lysine 162. Lysine 163 and lysine 173 each carry N6-acetyllysine. Lysine 178 is subject to N6-acetyllysine; alternate. Lysine 178 is modified (N6-succinyllysine; alternate). Lysine 185 is modified (N6-acetyllysine).

This sequence belongs to the bacterial ribosomal protein bL12 family. Component of the mitochondrial ribosome large subunit (39S) which comprises a 16S rRNA and about 50 distinct proteins. Interacts with NOA1. Two mature forms are produced by differential two-step proteolytic cleavage. Cleaved by the mitochondrial processing protease to produce the long mature form and subsequently by the mitochondrial intermediate protease to produce the short mature form. In terms of processing, in the presence of CUL3, undergoes 'Lys-63'-linked ubiquitination at Lys-150 which results in proteasomal degradation.

It is found in the mitochondrion matrix. Functionally, as a component of the mitochondrial large ribosomal subunit, plays a role in mitochondrial translation. When present in mitochondria as a free protein not associated with the ribosome, associates with mitochondrial RNA polymerase POLRMT to activate transcription. Required for POLRMT stability. The protein is Large ribosomal subunit protein bL12m (MRPL12) of Bos taurus (Bovine).